The sequence spans 619 residues: Phosphomethylpyrimidine synthase (619 aa).

The segment covering 93 to 104 has biased composition (basic and acidic residues); sequence IKPEDNGLKGPD. Residues 93 to 114 are disordered; it reads IKPEDNGLKGPDRSGGVTPFPN. Substrate contacts are provided by residues asparagine 217, methionine 246, tyrosine 275, histidine 311, 331 to 333, 372 to 375, and glutamate 411; these read SRG and DGLR. Histidine 415 is a Zn(2+) binding site. Tyrosine 438 provides a ligand contact to substrate. A Zn(2+)-binding site is contributed by histidine 479. [4Fe-4S] cluster contacts are provided by cysteine 559, cysteine 562, and cysteine 567.

Belongs to the ThiC family. As to quaternary structure, homodimer. Requires [4Fe-4S] cluster as cofactor.

It catalyses the reaction 5-amino-1-(5-phospho-beta-D-ribosyl)imidazole + S-adenosyl-L-methionine = 4-amino-2-methyl-5-(phosphooxymethyl)pyrimidine + CO + 5'-deoxyadenosine + formate + L-methionine + 3 H(+). Its pathway is cofactor biosynthesis; thiamine diphosphate biosynthesis. Catalyzes the synthesis of the hydroxymethylpyrimidine phosphate (HMP-P) moiety of thiamine from aminoimidazole ribotide (AIR) in a radical S-adenosyl-L-methionine (SAM)-dependent reaction. This chain is Phosphomethylpyrimidine synthase, found in Rhizorhabdus wittichii (strain DSM 6014 / CCUG 31198 / JCM 15750 / NBRC 105917 / EY 4224 / RW1) (Sphingomonas wittichii).